The following is a 654-amino-acid chain: Acetyl-coenzyme A synthetase (654 aa).

CoA contacts are provided by residues 190–193 (RGGK) and T313. Residues 389 to 391 (GEP), 413 to 418 (DTWWQT), D504, and R519 each bind ATP. S527 contributes to the CoA binding site. R530 is an ATP binding site. Mg(2+) is bound by residues V541 and V546. K613 carries the N6-acetyllysine modification.

This sequence belongs to the ATP-dependent AMP-binding enzyme family. Mg(2+) is required as a cofactor. Post-translationally, acetylated. Deacetylation by the SIR2-homolog deacetylase activates the enzyme.

It carries out the reaction acetate + ATP + CoA = acetyl-CoA + AMP + diphosphate. Functionally, catalyzes the conversion of acetate into acetyl-CoA (AcCoA), an essential intermediate at the junction of anabolic and catabolic pathways. AcsA undergoes a two-step reaction. In the first half reaction, AcsA combines acetate with ATP to form acetyl-adenylate (AcAMP) intermediate. In the second half reaction, it can then transfer the acetyl group from AcAMP to the sulfhydryl group of CoA, forming the product AcCoA. This Leptospira borgpetersenii serovar Hardjo-bovis (strain L550) protein is Acetyl-coenzyme A synthetase.